The sequence spans 96 residues: MGVKITGLDKMQKQLKEVERATEALNGSYDVRFDANDPSSIENAIQEAYSMVDERASGYATNPMVSPLIEHMKENLRQQILDSAEQQRQESGQDGD.

This is an uncharacterized protein from Escherichia coli (strain K12).